The primary structure comprises 436 residues: C4-dicarboxylate transport protein 2 (436 aa).

The next 9 helical transmembrane spans lie at 14–34 (VLVAIAIGIALGHWYPETAVA), 45–65 (LIKMAIAPIIFCTVVTGIAGM), 77–97 (MALLYFEVVSTVALIIGLVVV), 142–162 (VVGAFANGDILQVLFFSVLFG), 198–218 (PIGAFGAMAFTIGAYGVGSLV), 223–243 (LMLCFYITCILFVLIVLGGIA), 290–310 (VVGLVIPTGYSFNLDGTSIYL), 331–351 (ITLLLVLLIASKGAAGVTGSG), and 353–373 (IVLAATLSAVGHLPVAGLALI). The interval 414-436 (ELAGEGNASSPASDIPVGGREAV) is disordered.

The protein belongs to the dicarboxylate/amino acid:cation symporter (DAACS) (TC 2.A.23) family.

The protein resides in the cell inner membrane. In terms of biological role, responsible for the transport of dicarboxylates such as succinate, fumarate, and malate from the periplasm across the membrane. The sequence is that of C4-dicarboxylate transport protein 2 from Pseudomonas aeruginosa (strain UCBPP-PA14).